The primary structure comprises 362 residues: Protein-glutamate methylesterase/protein-glutamine glutaminase (362 aa).

The 118-residue stretch at 5 to 122 folds into the Response regulatory domain; the sequence is KVLCVDDSAL…RDGMLDYSEK (118 aa). At D56 the chain carries 4-aspartylphosphate. A CheB-type methylesterase domain is found at 163 to 355; it reads LLSTEKLIIV…RRVMARLSSM (193 aa). Residues S175, H201, and D297 contribute to the active site.

The protein belongs to the CheB family. Post-translationally, phosphorylated by CheA. Phosphorylation of the N-terminal regulatory domain activates the methylesterase activity.

It is found in the cytoplasm. It catalyses the reaction [protein]-L-glutamate 5-O-methyl ester + H2O = L-glutamyl-[protein] + methanol + H(+). It carries out the reaction L-glutaminyl-[protein] + H2O = L-glutamyl-[protein] + NH4(+). Functionally, involved in chemotaxis. Part of a chemotaxis signal transduction system that modulates chemotaxis in response to various stimuli. Catalyzes the demethylation of specific methylglutamate residues introduced into the chemoreceptors (methyl-accepting chemotaxis proteins or MCP) by CheR. Also mediates the irreversible deamidation of specific glutamine residues to glutamic acid. The sequence is that of Protein-glutamate methylesterase/protein-glutamine glutaminase from Paraburkholderia xenovorans (strain LB400).